The chain runs to 80 residues: Large ribosomal subunit protein bL28 (80 aa).

The tract at residues 1–21 (MSRICQITRKKSMKGNSVAHS) is disordered.

This sequence belongs to the bacterial ribosomal protein bL28 family.

This chain is Large ribosomal subunit protein bL28, found in Azobacteroides pseudotrichonymphae genomovar. CFP2.